The sequence spans 394 residues: Tyrosine--tRNA ligase, cytoplasmic (394 aa).

Ser-2 carries the post-translational modification N-acetylserine. Residue Tyr-43 coordinates L-tyrosine. The 'HIGH' region motif lies at 48 to 56 (PTGRPHCGY). Tyr-170, Gln-174, Asp-177, and Gln-192 together coordinate L-tyrosine. The 'KMSKS' region motif lies at 227–231 (KMSAS). Ser-235 carries the phosphoserine modification. The interval 348–394 (QEASEKGYPVATPQKSKKAKKPKNKGTKYPGATKTNEIATKLEETKL) is disordered. Thr-359 is subject to Phosphothreonine. Residues 360–378 (PQKSKKAKKPKNKGTKYPG) carry the Nuclear localization signal motif. The segment covering 362 to 373 (KSKKAKKPKNKG) has biased composition (basic residues).

This sequence belongs to the class-I aminoacyl-tRNA synthetase family. Homodimer. Interacts with KNR4/SMI1.

It localises to the cytoplasm. The protein localises to the nucleus. It carries out the reaction tRNA(Tyr) + L-tyrosine + ATP = L-tyrosyl-tRNA(Tyr) + AMP + diphosphate + H(+). With respect to regulation, inhibited by N-ethylmaleimide and p-chloromercuribenzoate. Functionally, catalyzes the attachment of L-tyrosine to tRNA(Tyr) in a two-step reaction: L-tyrosine is first activated by ATP to form Tyr-AMP and then transferred to the acceptor end of tRNA(Tyr). The specificity determinants on tRNA(Tyr) are the base pair C1-G72, the discriminator residue A73, and the three anticodon bases G34, U35 and A36. Also involved in nuclear tRNA export. Also attaches D-Tyr to tRNA(Tyr), this reaction is about 150-fold less efficient than attachment of L-Tyr. This chain is Tyrosine--tRNA ligase, cytoplasmic, found in Saccharomyces cerevisiae (strain ATCC 204508 / S288c) (Baker's yeast).